We begin with the raw amino-acid sequence, 164 residues long: SsrA-binding protein (164 aa).

It belongs to the SmpB family.

It localises to the cytoplasm. Required for rescue of stalled ribosomes mediated by trans-translation. Binds to transfer-messenger RNA (tmRNA), required for stable association of tmRNA with ribosomes. tmRNA and SmpB together mimic tRNA shape, replacing the anticodon stem-loop with SmpB. tmRNA is encoded by the ssrA gene; the 2 termini fold to resemble tRNA(Ala) and it encodes a 'tag peptide', a short internal open reading frame. During trans-translation Ala-aminoacylated tmRNA acts like a tRNA, entering the A-site of stalled ribosomes, displacing the stalled mRNA. The ribosome then switches to translate the ORF on the tmRNA; the nascent peptide is terminated with the 'tag peptide' encoded by the tmRNA and targeted for degradation. The ribosome is freed to recommence translation, which seems to be the essential function of trans-translation. This Corynebacterium efficiens (strain DSM 44549 / YS-314 / AJ 12310 / JCM 11189 / NBRC 100395) protein is SsrA-binding protein.